Reading from the N-terminus, the 429-residue chain is 3-phosphoshikimate 1-carboxyvinyltransferase (429 aa).

The 3-phosphoshikimate site is built by K20, S21, and R25. K20 contributes to the phosphoenolpyruvate binding site. Phosphoenolpyruvate is bound by residues G89 and R118. Residues S164, S165, Q166, S192, D311, and K338 each coordinate 3-phosphoshikimate. A phosphoenolpyruvate-binding site is contributed by Q166. D311 serves as the catalytic Proton acceptor. Positions 342 and 384 each coordinate phosphoenolpyruvate.

It belongs to the EPSP synthase family. Monomer.

The protein resides in the cytoplasm. It carries out the reaction 3-phosphoshikimate + phosphoenolpyruvate = 5-O-(1-carboxyvinyl)-3-phosphoshikimate + phosphate. It functions in the pathway metabolic intermediate biosynthesis; chorismate biosynthesis. In terms of biological role, catalyzes the transfer of the enolpyruvyl moiety of phosphoenolpyruvate (PEP) to the 5-hydroxyl of shikimate-3-phosphate (S3P) to produce enolpyruvyl shikimate-3-phosphate and inorganic phosphate. In Methanococcus vannielii (strain ATCC 35089 / DSM 1224 / JCM 13029 / OCM 148 / SB), this protein is 3-phosphoshikimate 1-carboxyvinyltransferase.